The chain runs to 134 residues: Prefoldin subunit 4 (134 aa).

A2 is subject to N-acetylalanine. S125 carries the post-translational modification Phosphoserine.

It belongs to the prefoldin subunit beta family. In terms of assembly, heterohexamer of two PFD-alpha type and four PFD-beta type subunits. Interacts with URI1; the interaction is phosphorylation-dependent and occurs in a growth-dependent manner.

The protein localises to the nucleus. The protein resides in the cytoplasm. Its subcellular location is the mitochondrion. Its function is as follows. Binds specifically to cytosolic chaperonin (c-CPN) and transfers target proteins to it. Binds to nascent polypeptide chain and promotes folding in an environment in which there are many competing pathways for nonnative proteins. The chain is Prefoldin subunit 4 (PFDN4) from Bos taurus (Bovine).